Here is a 142-residue protein sequence, read N- to C-terminus: Midkine-B (142 aa).

The N-terminal stretch at 1-20 (MELRAFCVILLITILAVSSQ) is a signal peptide. Cystine bridges form between Cys-36–Cys-60, Cys-44–Cys-69, Cys-51–Cys-73, Cys-83–Cys-115, and Cys-93–Cys-125.

It belongs to the pleiotrophin family. In adults, expression is highest in the brain, eye and bone, with lower expression in the heart and lung. Not expressed in the ovary. In the tailbud stage embryo, expressed in the head and tail regions as well as in the central nervous system (CNS).

The protein localises to the secreted. Its function is as follows. Secreted protein that functions as a cytokine and growth factor and mediates its signal through cell-surface proteoglycan and non-proteoglycan receptors. Binds cell-surface proteoglycan receptors via their chondroitin sulfate (CS) groups. Thereby regulates many processes like inflammatory response, cell proliferation, cell adhesion, cell growth, cell survival, tissue regeneration, cell differentiation and cell migration. Inhibits mesoderm formation and promotes neural formation during development. Plays a role in development of the neuromuscular junction (NMJ). Has antibacterial activity against both Gram-positive and Gram-negative bacteria. In Xenopus laevis (African clawed frog), this protein is Midkine-B (mdk-b).